The following is a 313-amino-acid chain: MLDKIIRIATRQSPLALWQAHYVQHLLQANHPGLQIELVPMVTRGDIILDTPLAKVGGKGLFVKELELALLDGRADIAVHSMKDVPIAFPEGLGLVTICEREDPRDAFVSSHYAHLDDLPAGSVVGTSSLRRQCQLRERRPDLIIRDLRGNVGTRLAKLDNGDYQAIILAVAGLKRLGLENRIRYAMSAEESLPAVGQGAVGIECRLDDDHTRQLLAPLNHRHTELRVCAERAMNIRLEGGCQVPIGSYAELEGDTLWLRALVGAPDGSQMIRGERRGPAAEAEQMGIELADELLSLGAREILAAVYLDNPAR.

Cysteine 242 carries the post-translational modification S-(dipyrrolylmethanemethyl)cysteine.

Belongs to the HMBS family. As to quaternary structure, monomer. The cofactor is dipyrromethane.

It carries out the reaction 4 porphobilinogen + H2O = hydroxymethylbilane + 4 NH4(+). Its pathway is porphyrin-containing compound metabolism; protoporphyrin-IX biosynthesis; coproporphyrinogen-III from 5-aminolevulinate: step 2/4. In terms of biological role, tetrapolymerization of the monopyrrole PBG into the hydroxymethylbilane pre-uroporphyrinogen in several discrete steps. In Yersinia pestis bv. Antiqua (strain Angola), this protein is Porphobilinogen deaminase.